Here is a 515-residue protein sequence, read N- to C-terminus: Maturase K (515 aa).

The protein belongs to the intron maturase 2 family. MatK subfamily.

The protein localises to the plastid. The protein resides in the chloroplast. In terms of biological role, usually encoded in the trnK tRNA gene intron. Probably assists in splicing its own and other chloroplast group II introns. In Pinus attenuata (Knobcone pine), this protein is Maturase K.